A 319-amino-acid chain; its full sequence is Transcriptional regulator LsrR (319 aa).

Positions glutamine 32–glutamine 55 form a DNA-binding region, H-T-H motif.

It belongs to the SorC transcriptional regulatory family.

It localises to the cytoplasm. Inactivated by phosphorylated autoinducer-2 (phospho-AI-2). Phospho-AI-2 acts by binding to LsrR, which is then unable to bind to the promoter regions, allowing the transcription of the target genes. Functionally, transcriptional regulator that represses the expression of the lsr operon (lsrACDBFGE) in the absence of the quorum-sensing signaling molecule autoinducer 2 (AI-2). It also represses the expression of the lsrRK operon. Acts by binding to the intergenic region between the lsr operon and lsrR. In the presence of phosphorylated autoinducer-2 (phospho-AI-2), LsrR is inactivated, leading to the transcription of the genes. The regulatory function of LsrR was thought to be limited to the lsr operon, but it was subsequently shown to be involved, directly or indirectly, in the regulation of SPI-1 and flagella genes. It negatively regulates the expression of those genes, which reduces the ability of Salmonella to invade host cells. This is Transcriptional regulator LsrR from Salmonella typhimurium (strain LT2 / SGSC1412 / ATCC 700720).